We begin with the raw amino-acid sequence, 768 residues long: Kelch domain-containing protein 7A (768 aa).

Residues Val12–Tyr29 form a helical membrane-spanning segment. The disordered stretch occupies residues Pro35–Met210. The residue at position 77 (Ser77) is a Phosphoserine. A compositionally biased stretch (basic and acidic residues) spans Thr104–Gly118. Asn248 carries an N-linked (GlcNAc...) asparagine glycan. The segment at Leu304–Ser352 is disordered. Residues Thr319–Glu365 form a Kelch 1 repeat. Phosphoserine is present on Ser356. Residues Asp371–Glu395 form a disordered region. 4 Kelch repeats span residues Gln483–Leu529, Tyr532–Gly580, His581–Cys623, and Glu626–Gly668.

It is found in the membrane. The sequence is that of Kelch domain-containing protein 7A (KLHDC7A) from Pongo abelii (Sumatran orangutan).